We begin with the raw amino-acid sequence, 148 residues long: General odorant-binding protein 69a (148 aa).

Residues 1-23 (MVARHFSFFLALLILYDLIPSNQ) form the signal peptide. Disulfide bonds link C42/C74, C70/C121, and C112/C130.

It belongs to the PBP/GOBP family. Expressed in the antenna, mostly on the anterior surface of the third antennal segment. Expressed in auxiliary cells and the third antennal segment and exported to the sensillar lymph (at protein level).

It localises to the secreted. In terms of biological role, odorant-binding protein required for olfactory behavior and activity of pheromone-sensitive neurons in response to the male-specific pheromone cis-vaccenyl acetate (cVA). Modulates social responsivity differently in males and females, regulating male aggression and female receptivity respectively. This is General odorant-binding protein 69a (Obp69a) from Drosophila melanogaster (Fruit fly).